The following is a 259-amino-acid chain: Major cell-binding factor (259 aa).

Positions 1 to 26 (MVFRKSLLKLAVFALGACVAFSNANA) are cleaved as a signal peptide.

The protein belongs to the bacterial solute-binding protein 3 family.

Its subcellular location is the cell surface. Its function is as follows. Common antigen and a major cell adherence molecule. Most probably involved, with PEB1C, in a binding-protein-dependent transport system for an amino acid. May be involved in binding to intestinal cells. In Campylobacter jejuni subsp. jejuni serotype O:23/36 (strain 81-176), this protein is Major cell-binding factor (peb1A).